We begin with the raw amino-acid sequence, 432 residues long: 5'-deoxyadenosine deaminase (432 aa).

2 residues coordinate Zn(2+): histidine 63 and histidine 65. Substrate-binding residues include glutamate 92 and histidine 184. Histidine 211 lines the Zn(2+) pocket. Substrate is bound by residues glutamate 214 and aspartate 299. Position 299 (aspartate 299) interacts with Zn(2+).

The protein belongs to the metallo-dependent hydrolases superfamily. MTA/SAH deaminase family. As to quaternary structure, homotetramer. Requires Zn(2+) as cofactor.

It catalyses the reaction 5'-deoxyadenosine + H2O + H(+) = 5'-deoxyinosine + NH4(+). The catalysed reaction is S-adenosyl-L-homocysteine + H2O + H(+) = S-inosyl-L-homocysteine + NH4(+). The enzyme catalyses S-methyl-5'-thioadenosine + H2O + H(+) = S-methyl-5'-thioinosine + NH4(+). It carries out the reaction adenosine + H2O + H(+) = inosine + NH4(+). It participates in amino-acid biosynthesis; S-adenosyl-L-methionine biosynthesis. In terms of biological role, catalyzes the deamination of three SAM-derived enzymatic products, namely 5'-deoxyadenosine, S-adenosyl-L-homocysteine, and 5'-methylthioadenosine, to produce the inosine analogs. Can also deaminate adenosine. The preferred substrate for this enzyme is 5'-deoxyadenosine, but all these substrates are efficiently deaminated. Likely functions in a S-adenosyl-L-methionine (SAM) recycling pathway from S-adenosyl-L-homocysteine (SAH) produced from SAM-dependent methylation reactions. May also be involved in the recycling of 5'-deoxyadenosine, whereupon the 5'-deoxyribose moiety of 5'-deoxyinosine is further metabolized to deoxyhexoses used for the biosynthesis of aromatic amino acids in methanogens. The polypeptide is 5'-deoxyadenosine deaminase (Methanosarcina barkeri (strain Fusaro / DSM 804)).